The primary structure comprises 193 residues: ATP-dependent Clp protease proteolytic subunit 1 (193 aa).

The active-site Nucleophile is serine 99. Histidine 124 is an active-site residue.

Belongs to the peptidase S14 family. As to quaternary structure, fourteen ClpP subunits assemble into 2 heptameric rings which stack back to back to give a disk-like structure with a central cavity, resembling the structure of eukaryotic proteasomes.

The protein localises to the cytoplasm. It carries out the reaction Hydrolysis of proteins to small peptides in the presence of ATP and magnesium. alpha-casein is the usual test substrate. In the absence of ATP, only oligopeptides shorter than five residues are hydrolyzed (such as succinyl-Leu-Tyr-|-NHMec, and Leu-Tyr-Leu-|-Tyr-Trp, in which cleavage of the -Tyr-|-Leu- and -Tyr-|-Trp bonds also occurs).. Functionally, cleaves peptides in various proteins in a process that requires ATP hydrolysis. Has a chymotrypsin-like activity. Plays a major role in the degradation of misfolded proteins. The sequence is that of ATP-dependent Clp protease proteolytic subunit 1 from Shouchella clausii (strain KSM-K16) (Alkalihalobacillus clausii).